Consider the following 432-residue polypeptide: Adenylosuccinate synthetase (432 aa).

Residues Gly13–Lys19 and Gly41–Thr43 each bind GTP. Residue Asp14 is the Proton acceptor of the active site. Mg(2+)-binding residues include Asp14 and Gly41. IMP contacts are provided by residues Asp14–Lys17, Asn39–His42, Thr130, Arg144, Gln225, Thr240, and Arg304. Residue His42 is the Proton donor of the active site. Position 300-306 (Ala300–Arg306) interacts with substrate. Residues Arg306, Lys332–Asp334, and Ser415–Gly417 each bind GTP.

Belongs to the adenylosuccinate synthetase family. As to quaternary structure, homodimer. Mg(2+) is required as a cofactor.

It is found in the cytoplasm. It catalyses the reaction IMP + L-aspartate + GTP = N(6)-(1,2-dicarboxyethyl)-AMP + GDP + phosphate + 2 H(+). It participates in purine metabolism; AMP biosynthesis via de novo pathway; AMP from IMP: step 1/2. Functionally, plays an important role in the de novo pathway of purine nucleotide biosynthesis. Catalyzes the first committed step in the biosynthesis of AMP from IMP. The polypeptide is Adenylosuccinate synthetase (Alteromonas mediterranea (strain DSM 17117 / CIP 110805 / LMG 28347 / Deep ecotype)).